Reading from the N-terminus, the 248-residue chain is Ras-like protein family member 11B (248 aa).

Residues 29–246 form a small GTPase-like region; it reads AGRRLVKIAV…ALSAKVRTVT (218 aa). GTP is bound by residues 40-47, 87-94, and 152-155; these read GASGVGKT, DTPGIQVH, and NKAD. A disordered region spans residues 205–226; the sequence is QQPSSTPEKRRTSLIPRPKSPN.

Belongs to the small GTPase superfamily. Ras family. As to expression, widely expressed with highest levels in placenta and primary macrophages.

The catalysed reaction is GTP + H2O = GDP + phosphate + H(+). This is Ras-like protein family member 11B from Homo sapiens (Human).